The chain runs to 357 residues: 3-isopropylmalate dehydrogenase (357 aa).

Residues Arg-97, Arg-107, Arg-135, and Asp-224 each contribute to the substrate site. Asp-224, Asp-248, and Asp-252 together coordinate Mg(2+). Residue Gly-282 to Asn-294 participates in NAD(+) binding.

The protein belongs to the isocitrate and isopropylmalate dehydrogenases family. LeuB type 1 subfamily. In terms of assembly, homodimer. The cofactor is Mg(2+). It depends on Mn(2+) as a cofactor.

Its subcellular location is the cytoplasm. It catalyses the reaction (2R,3S)-3-isopropylmalate + NAD(+) = 4-methyl-2-oxopentanoate + CO2 + NADH. It functions in the pathway amino-acid biosynthesis; L-leucine biosynthesis; L-leucine from 3-methyl-2-oxobutanoate: step 3/4. Catalyzes the oxidation of 3-carboxy-2-hydroxy-4-methylpentanoate (3-isopropylmalate) to 3-carboxy-4-methyl-2-oxopentanoate. The product decarboxylates to 4-methyl-2 oxopentanoate. This is 3-isopropylmalate dehydrogenase from Prochlorococcus marinus (strain MIT 9312).